Here is a 159-residue protein sequence, read N- to C-terminus: Small ribosomal subunit protein uS4 (159 aa).

Residues 106–158 (RRLQTLVFRMGLAKSIHHARQLVVHGHVLVAGRRVTSPGFLVPRELEDKITIE) form the S4 RNA-binding domain.

This sequence belongs to the universal ribosomal protein uS4 family. As to quaternary structure, part of the 30S ribosomal subunit. Contacts protein S5. The interaction surface between S4 and S5 is involved in control of translational fidelity.

In terms of biological role, one of the primary rRNA binding proteins, it binds directly to 16S rRNA where it nucleates assembly of the body of the 30S subunit. Its function is as follows. With S5 and S12 plays an important role in translational accuracy. The protein is Small ribosomal subunit protein uS4 of Pyrobaculum calidifontis (strain DSM 21063 / JCM 11548 / VA1).